Reading from the N-terminus, the 225-residue chain is Histone H1.11L (225 aa).

Low complexity-rich tracts occupy residues 1-23 and 31-43; these read MSET…PAKA and AAGG…PAGP. 2 disordered regions span residues 1–46 and 94–225; these read MSET…PSVT and SKGT…AKKK. Ser2 carries the post-translational modification N-acetylserine. Residues 41–114 form the H15 domain; the sequence is AGPSVTELIT…GASGSFRLSK (74 aa). 4 stretches are compositionally biased toward basic residues: residues 123-138, 146-163, 171-189, and 198-225; these read APKK…KPAA, KKPK…KAKK, KSAK…KKAV, and KAVK…AKKK.

The protein belongs to the histone H1/H5 family.

It is found in the nucleus. The protein localises to the chromosome. Histones H1 are necessary for the condensation of nucleosome chains into higher-order structures. In Gallus gallus (Chicken), this protein is Histone H1.11L.